We begin with the raw amino-acid sequence, 404 residues long: Serine/threonine-protein phosphatase 2A regulatory subunit rsa-1 (404 aa).

In terms of assembly, part of a complex consisting of a common heterodimeric core enzyme, composed of catalytic subunit let-92 and constant regulatory subunit paa-1, that associates with a variety of regulatory subunits which confer distinct properties to the holoenzyme. Interacts with rsa-2, spd-5 and tpxl-1.

The protein resides in the cytoplasm. Its subcellular location is the cytoskeleton. It localises to the microtubule organizing center. It is found in the centrosome. Functionally, regulatory subunit of phosphatase let-92 which recruits let-92/paa-1 complex to the centrosomes, thereby regulating microtubule outgrowth from centrosomes and mitotic spindle assembly ensuring the stability of kinetochore microtubules. The sequence is that of Serine/threonine-protein phosphatase 2A regulatory subunit rsa-1 from Caenorhabditis elegans.